Here is a 543-residue protein sequence, read N- to C-terminus: tRNA (guanine(37)-N(1))-methyltransferase (543 aa).

A mitochondrion-targeting transit peptide spans methionine 1–threonine 59. S-adenosyl-L-methionine-binding positions include histidine 282, aspartate 320–leucine 321, and aspartate 348–glycine 349. The segment at aspartate 366–methionine 405 is disordered. Asparagine 431 is a binding site for S-adenosyl-L-methionine.

This sequence belongs to the class I-like SAM-binding methyltransferase superfamily. TRM5/TYW2 family. In terms of assembly, monomer.

It localises to the mitochondrion matrix. The protein resides in the nucleus. Its subcellular location is the cytoplasm. The enzyme catalyses guanosine(37) in tRNA + S-adenosyl-L-methionine = N(1)-methylguanosine(37) in tRNA + S-adenosyl-L-homocysteine + H(+). Functionally, specifically methylates the N1 position of guanosine-37 in various cytoplasmic and mitochondrial tRNAs. Methylation is not dependent on the nature of the nucleoside 5' of the target nucleoside. This is the first step in the biosynthesis of wybutosine (yW), a modified base adjacent to the anticodon of tRNAs and required for accurate decoding. The polypeptide is tRNA (guanine(37)-N(1))-methyltransferase (Cryptococcus neoformans var. neoformans serotype D (strain JEC21 / ATCC MYA-565) (Filobasidiella neoformans)).